The sequence spans 534 residues: Glutamyl-tRNA(Gln) amidotransferase subunit B, mitochondrial (534 aa).

A mitochondrion-targeting transit peptide spans 1-28 (MTVLCRLRHCHLSTPTLCRRFHDARVYK).

Belongs to the GatB/GatE family. GatB subfamily. As to quaternary structure, subunit of the heterotrimeric GatCAB amidotransferase (AdT) complex, composed of A, B and C subunits.

The protein resides in the mitochondrion. The catalysed reaction is L-glutamyl-tRNA(Gln) + L-glutamine + ATP + H2O = L-glutaminyl-tRNA(Gln) + L-glutamate + ADP + phosphate + H(+). Its function is as follows. Allows the formation of correctly charged Gln-tRNA(Gln) through the transamidation of misacylated Glu-tRNA(Gln) in the mitochondria. The reaction takes place in the presence of glutamine and ATP through an activated gamma-phospho-Glu-tRNA(Gln). The sequence is that of Glutamyl-tRNA(Gln) amidotransferase subunit B, mitochondrial from Laccaria bicolor (strain S238N-H82 / ATCC MYA-4686) (Bicoloured deceiver).